The sequence spans 550 residues: MNGSADAGPRPRKYVFITGGVVSSLGKGILTSSLGALLRARGYRVTAIKIDPYVNVDAGTMRPYEHGEVFVTADGAETDLDIGHYERFLDMDLSRGNNLTTGQVYLSVIQKERRGEYLSQTVQVIPHITDEIKERIRKVAEEQKAEIVVVEVGGTVGDIESLPFLEAIRQFRFDEGEGNTLYLHLTLVPYLETSEEFKTKPTQHSVATLRGVGIQPDILVLRSARPVPEEVRRKVALFTNVRPGHVFSSPTVEHLYEVPLLLEEQGLGRAVERALGLEAVIPNLSFWQEAVRVLKHPERTVKIAIAGKYVKMPDAYLSLLEALRHAGIKNRARVEVKWVDAESLEAADLDEAFRDVSGILVPGGFGVRGIEGKVRAAQYARERKIPYLGICLGLQIAVIEFARNVAGLKGANSTEFDPHTPHPVIDLMPEQLEVEGLGGTMRLGDWPMRIKPGTLLHRLYGKEEVLERHRHRYEVNPLYVDGLERAGLVVSATTPGMRGRGAGLVEAIELKDHPFFLGLQSHPEFKSRPMRPSPPFVGFVEAALAYQERA.

Residues 1 to 277 are amidoligase domain; that stretch reads MNGSADAGPR…GRAVERALGL (277 aa). Ser-23 provides a ligand contact to CTP. Ser-23 contributes to the UTP binding site. 24–29 lines the ATP pocket; sequence SLGKGI. An L-glutamine-binding site is contributed by Tyr-64. Asp-81 contacts ATP. Mg(2+)-binding residues include Asp-81 and Glu-151. Residues 158-160, 198-203, and Lys-234 each bind CTP; these read DIE and KTKPTQ. UTP-binding positions include 198-203 and Lys-234; that span reads KTKPTQ. ATP is bound at residue Val-252. One can recognise a Glutamine amidotransferase type-1 domain in the interval 302 to 549; sequence KIAIAGKYVK…VEAALAYQER (248 aa). Gly-364 contacts L-glutamine. The Nucleophile; for glutamine hydrolysis role is filled by Cys-391. Residues 392–395, Glu-415, and Arg-472 contribute to the L-glutamine site; that span reads LGLQ. Catalysis depends on residues His-522 and Glu-524.

Belongs to the CTP synthase family. In terms of assembly, homotetramer in the presence of UTP and ATP. Is in a protein concentration-dependent equilibrium between monomer, dimer, and tetramer in the absence of UTP and ATP.

It catalyses the reaction UTP + L-glutamine + ATP + H2O = CTP + L-glutamate + ADP + phosphate + 2 H(+). It carries out the reaction L-glutamine + H2O = L-glutamate + NH4(+). The catalysed reaction is UTP + NH4(+) + ATP = CTP + ADP + phosphate + 2 H(+). The protein operates within pyrimidine metabolism; CTP biosynthesis via de novo pathway; CTP from UDP: step 2/2. With respect to regulation, allosterically activated by GTP, when glutamine is the substrate. GTP has no effect on the reaction when ammonia is the substrate. The allosteric effector GTP functions by stabilizing the protein conformation that binds the tetrahedral intermediate(s) formed during glutamine hydrolysis. Inhibited by the product CTP, via allosteric rather than competitive inhibition. In terms of biological role, catalyzes the ATP-dependent amination of UTP to CTP with either L-glutamine or ammonia as the source of nitrogen. Regulates intracellular CTP levels through interactions with the four ribonucleotide triphosphates. The chain is CTP synthase from Thermus thermophilus (strain ATCC 27634 / DSM 579 / HB8).